The following is a 178-amino-acid chain: Large ribosomal subunit protein uL6 (178 aa).

It belongs to the universal ribosomal protein uL6 family. In terms of assembly, part of the 50S ribosomal subunit.

Functionally, this protein binds to the 23S rRNA, and is important in its secondary structure. It is located near the subunit interface in the base of the L7/L12 stalk, and near the tRNA binding site of the peptidyltransferase center. This is Large ribosomal subunit protein uL6 from Streptococcus suis (strain 05ZYH33).